The sequence spans 129 residues: NADH-quinone oxidoreductase subunit A (129 aa).

The next 3 helical transmembrane spans lie at 14 to 34 (LAIHVALSAGIVAAIIVVAAW), 67 to 87 (FLIAALFVIFDMEAAILFAWA), and 95 to 115 (WLGLIEAAVFIGVLLLALVYL).

It belongs to the complex I subunit 3 family. As to quaternary structure, NDH-1 is composed of 14 different subunits. Subunits NuoA, H, J, K, L, M, N constitute the membrane sector of the complex.

It is found in the cell inner membrane. It catalyses the reaction a quinone + NADH + 5 H(+)(in) = a quinol + NAD(+) + 4 H(+)(out). Functionally, NDH-1 shuttles electrons from NADH, via FMN and iron-sulfur (Fe-S) centers, to quinones in the respiratory chain. The immediate electron acceptor for the enzyme in this species is believed to be ubiquinone. Couples the redox reaction to proton translocation (for every two electrons transferred, four hydrogen ions are translocated across the cytoplasmic membrane), and thus conserves the redox energy in a proton gradient. The sequence is that of NADH-quinone oxidoreductase subunit A from Rhodopseudomonas palustris (strain BisB5).